A 341-amino-acid chain; its full sequence is MKVEEFDYELPEELIAQKPLPNRDDSRLMVLHRKTGEIEETVFKNIIKFLEPGDLLVLNDTKVIPARLFGEKIPSGTRIEVLLLKSITEGLWEVLVRPGRRMKKGNRVSFGDGKLVGIVKDYTDFGGRIMQFEYDGDFDKVIEELGEMPLPPYITRKVEDKGRYQTVYARKKGSVAAPTAGLHFTDRLLKKIKEQGIGIIYLTLHVGLGTFRPVRAENVEDHKMHSEYFEVSTDVVNRIKETKEKGKKVIAVGTTVTRALESAAVEKRHLKAMRGWTDIFIYPGYNFKVIDGLITNFHLPKSTLLMLVSAFAGKDMVMSAYKLAIKNKYRFFSFGDAMLIL.

The protein belongs to the QueA family. As to quaternary structure, monomer.

Its subcellular location is the cytoplasm. It catalyses the reaction 7-aminomethyl-7-carbaguanosine(34) in tRNA + S-adenosyl-L-methionine = epoxyqueuosine(34) in tRNA + adenine + L-methionine + 2 H(+). The protein operates within tRNA modification; tRNA-queuosine biosynthesis. Transfers and isomerizes the ribose moiety from AdoMet to the 7-aminomethyl group of 7-deazaguanine (preQ1-tRNA) to give epoxyqueuosine (oQ-tRNA). The sequence is that of S-adenosylmethionine:tRNA ribosyltransferase-isomerase from Halothermothrix orenii (strain H 168 / OCM 544 / DSM 9562).